The sequence spans 363 residues: Protein-glutamate methylesterase/protein-glutamine glutaminase 2 (363 aa).

Residues 6–123 (RVLIVDDSAS…AQFLLESKIH (118 aa)) form the Response regulatory domain. Asp57 is modified (4-aspartylphosphate). One can recognise a CheB-type methylesterase domain in the interval 172–363 (ARTTESVICI…AMEILRAGNR (192 aa)). Active-site residues include Ser184, His210, and Asp306.

This sequence belongs to the CheB family. Post-translationally, phosphorylated by CheA. Phosphorylation of the N-terminal regulatory domain activates the methylesterase activity.

It is found in the cytoplasm. It carries out the reaction [protein]-L-glutamate 5-O-methyl ester + H2O = L-glutamyl-[protein] + methanol + H(+). The enzyme catalyses L-glutaminyl-[protein] + H2O = L-glutamyl-[protein] + NH4(+). In terms of biological role, involved in chemotaxis. Part of a chemotaxis signal transduction system that modulates chemotaxis in response to various stimuli. Catalyzes the demethylation of specific methylglutamate residues introduced into the chemoreceptors (methyl-accepting chemotaxis proteins or MCP) by CheR. Also mediates the irreversible deamidation of specific glutamine residues to glutamic acid. This chain is Protein-glutamate methylesterase/protein-glutamine glutaminase 2, found in Rhodospirillum rubrum (strain ATCC 11170 / ATH 1.1.1 / DSM 467 / LMG 4362 / NCIMB 8255 / S1).